Reading from the N-terminus, the 3412-residue chain is Genome polyprotein (3412 aa).

Topologically, residues 1–104 (MSGRKAQGKT…LSSRKRRSNE (104 aa)) are cytoplasmic. A hydrophobic; homodimerization of capsid protein C region spans residues 38 to 72 (PGPSRGVQGFIFFFLFNILTGKKLTTHLKRLWRML). Positions 102–121 (SNEMAMMPLLILSMVILAGG) are cleaved as a propeptide — ER anchor for the capsid protein C, removed in mature form by serine protease NS3. A helical membrane pass occupies residues 105–125 (MAMMPLLILSMVILAGGVTLV). Topologically, residues 126-244 (RKNRWLLLNV…GERQLQKIER (119 aa)) are extracellular. 2 N-linked (GlcNAc...) asparagine; by host glycosylation sites follow: Asn-134 and Asn-150. A helical transmembrane segment spans residues 245–265 (WLVRNPFFAITALAIAYLVGN). Over 266-270 (NMTQR) the chain is Cytoplasmic. The chain crosses the membrane as a helical span at residues 271–285 (VVIALLVLAVGPAYS). Over 286 to 730 (AHCIGITDRD…TVFGSAFQGL (445 aa)) the chain is Extracellular. Disulfide bonds link Cys-288-Cys-315, Cys-345-Cys-401, Cys-345-Cys-406, Cys-359-Cys-390, Cys-377-Cys-401, Cys-377-Cys-406, Cys-467-Cys-568, and Cys-585-Cys-615. The tract at residues 383–396 (DRGWGNGCGLFGKG) is fusion peptide. Residues 731 to 751 (FGGLSWITKVIMGAVLIWVGI) form a helical membrane-spanning segment. The Extracellular portion of the chain corresponds to 752 to 757 (NTRNMT). Residues 758-778 (MSMSMILVGVIMMFLSLGVGA) form a helical membrane-spanning segment. At 779-1132 (DQGCAVNFGK…LVRSWVTAGE (354 aa)) the chain is on the extracellular side. Disulfide bonds link Cys-782–Cys-793, Cys-833–Cys-921, Cys-957–Cys-1002, Cys-1058–Cys-1107, Cys-1069–Cys-1091, and Cys-1090–Cys-1094. N-linked (GlcNAc...) asparagine; by host glycans are attached at residues Asn-908 and Asn-986. Residues 1133–1153 (VHAVPFGLVSMMIAMEVVLRK) form a helical membrane-spanning segment. Topologically, residues 1154–1201 (RQGPKQMLVGGIILLGAMLVGQVTVLDLVKLIVAVGLHFHEINNGGDA) are cytoplasmic. A helical transmembrane segment spans residues 1202 to 1222 (MYMALIASFSIRPGLLVGFGL). The Lumenal portion of the chain corresponds to 1223–1287 (RTLWSPRERL…VLPLMALLTP (65 aa)). Residues 1288 to 1308 (VTMHEVRMATMLFCTVVIVGV) form a helical membrane-spanning segment. Over 1309–1355 (LHQNAKDTSMQKTIPIVALTLTSYMGLTQPFLGLCAYMSTQVFGRRS) the chain is Cytoplasmic. The helical transmembrane segment at 1356–1376 (IPVNEALAAAGLVGVLAGLAF) threads the bilayer. Residues 1377-1378 (QD) lie on the Lumenal side of the membrane. Residues 1379 to 1399 (MENFLGPIAVGGILMMLVSVA) traverse the membrane as a helical segment. Residues 1400 to 1456 (GKVDGLELKKLGEVSWEEEAEISGSSSRYDVALSEQGEFKLLSEDKVPWDQIVMTSL) lie on the Cytoplasmic side of the membrane. The interacts with and activates NS3 protease stretch occupies residues 1407–1446 (LKKLGEVSWEEEAEISGSSSRYDVALSEQGEFKLLSEDKV). An intramembrane region (helical) is located at residues 1457–1477 (ALVGAAIHPFALLLVLGGWVL). Residues 1478 to 2157 (HIKGARRSGD…RNALSMMPEA (680 aa)) are Cytoplasmic-facing. The Peptidase S7 domain maps to 1485–1665 (SGDVLWDIPT…EVKEESKEEL (181 aa)). Catalysis depends on charge relay system; for serine protease NS3 activity residues His-1537, Asp-1561, and Ser-1622. The 157-residue stretch at 1669 to 1825 (PTMLKKGMTT…HSNGEIEDVQ (157 aa)) folds into the Helicase ATP-binding domain. Positions 1673–1676 (KKGM) are important for RNA-binding. An ATP-binding site is contributed by 1682–1689 (FHPGAGKT). Positions 1773-1776 (DEAH) match the DEAH box motif. The 178-residue stretch at 1820 to 1997 (EIEDVQTDIP…VRGGMVAPLY (178 aa)) folds into the Helicase C-terminal domain. Lys-1877 carries the post-translational modification N6-acetyllysine; by host. Residues 1942 to 1961 (AAQRRGRIGRNPNRDGDSYY) are disordered. Residues 2158–2178 (MTIVMLFILAGLLTSGMVIFF) traverse the membrane as a helical segment. Residues 2179–2186 (MSPKGMSR) lie on the Lumenal side of the membrane. Residues 2187 to 2207 (MSMAMGTMAGSGYLMFLGGVK) constitute an intramembrane region (helical). The Lumenal segment spans residues 2208 to 2209 (PT). The helical transmembrane segment at 2210–2230 (HISYVMLIFFVLMVVIIPEPG) threads the bilayer. Over 2231–2241 (QQRTIQDNQVA) the chain is Cytoplasmic. A helical transmembrane segment spans residues 2242–2262 (YLIIGILTLLSIVAANELGML). Over 2263–2293 (EKTKEDFFGRRNIATSGGTIPWSWPDLDLKP) the chain is Lumenal. Residues 2294 to 2314 (GAAWTVYVGIVTMLSPMLHHW) constitute an intramembrane region (helical). Topologically, residues 2315–2360 (IKVEYGNLSLSGIAQSASVLSFMDKGIPFMKMNISVVILLVSGWNS) are lumenal. The chain crosses the membrane as a helical span at residues 2361 to 2380 (ITVIPLLCGVGGAMLHWTLI). Topologically, residues 2381 to 2421 (LPGIKAQQSKLAQKRVFHGVAKNPVVDGNPTADIEEAPEMP) are cytoplasmic. A helical membrane pass occupies residues 2422–2442 (ALYEKKLALYLLLALSLMSVA). Over 2443–2445 (MCR) the chain is Lumenal. A helical transmembrane segment spans residues 2446–2466 (TPFSLAEGIVLSSAALGPLIE). At 2467–3411 (GNTSLLWNGP…VDADLQPGEL (945 aa)) the chain is on the cytoplasmic side. In terms of domain architecture, mRNA cap 0-1 NS5-type MT spans 2508 to 2772 (GSASGKTLGE…DVILPIGTRS (265 aa)). Ser-2563 serves as a coordination point for S-adenosyl-L-methionine. At Ser-2563 the chain carries Phosphoserine. The For 2'-O-MTase activity role is filled by Lys-2568. Residues Gly-2593, Trp-2594, Thr-2611, Leu-2612, Asp-2638, and Ile-2639 each contribute to the S-adenosyl-L-methionine site. The For 2'-O-MTase activity role is filled by Asp-2653. Ile-2654 contacts S-adenosyl-L-methionine. Residues Lys-2689 and Glu-2725 each act as for 2'-O-MTase activity in the active site. Tyr-2727 provides a ligand contact to S-adenosyl-L-methionine. Residues 2879–2912 (RKIMKVVNRWLFRHLAREKNPRLCTKEEFIAKVR) carry the Nuclear localization signal motif. Zn(2+) contacts are provided by Glu-2946, His-2950, Cys-2955, and Cys-2958. Residues 3036–3188 (GGFYADDTAG…RPVDDRFGLA (153 aa)) form the RdRp catalytic domain. The Zn(2+) site is built by His-3223, Cys-3239, and Cys-3358.

This sequence in the N-terminal section; belongs to the class I-like SAM-binding methyltransferase superfamily. mRNA cap 0-1 NS5-type methyltransferase family. As to quaternary structure, homodimer. Interacts (via N-terminus) with host EXOC1 (via C-terminus); this interaction results in EXOC1 degradation through the proteasome degradation pathway. Forms heterodimers with envelope protein E in the endoplasmic reticulum and Golgi. In terms of assembly, homodimer; in the endoplasmic reticulum and Golgi. Interacts with protein prM. Interacts with non-structural protein 1. As to quaternary structure, homodimer; Homohexamer when secreted. Interacts with envelope protein E. Interacts (via N-terminus) with serine protease NS3. In terms of assembly, forms a heterodimer with serine protease NS3. May form homooligomers. As to quaternary structure, forms a heterodimer with NS2B. Interacts with non-structural protein 2A (via N-terminus). Interacts with NS4B. Interacts with unphosphorylated RNA-directed RNA polymerase NS5; this interaction stimulates RNA-directed RNA polymerase NS5 guanylyltransferase activity. NS3 interacts with host PDCD6IP; this interaction contributes to virion release. Interacts with serine protease NS3. In terms of assembly, homodimer. Interacts with host STAT2; this interaction prevents the establishment of cellular antiviral state. Interacts with serine protease NS3. Interacts with host TRIM23; this interaction leads to NS5 ubiquitination. Specific enzymatic cleavages in vivo yield mature proteins. The nascent capsid protein C contains a C-terminal hydrophobic domain that act as a signal sequence for translocation of prM into the lumen of the ER. Mature capsid protein C is cleaved at a site upstream of this hydrophobic domain by NS3. prM is cleaved in post-Golgi vesicles by a host furin, releasing the mature small envelope protein M, and peptide pr. Non-structural protein 2A-alpha, a C-terminally truncated form of non-structural protein 2A, results from partial cleavage by NS3. Specific enzymatic cleavages in vivo yield mature proteins peptide 2K acts as a signal sequence and is removed from the N-terminus of NS4B by the host signal peptidase in the ER lumen. Signal cleavage at the 2K-4B site requires a prior NS3 protease-mediated cleavage at the 4A-2K site. In terms of processing, cleaved in post-Golgi vesicles by a host furin, releasing the mature small envelope protein M, and peptide pr. This cleavage is incomplete as up to 30% of viral particles still carry uncleaved prM. Post-translationally, N-glycosylated. N-glycosylated. The excreted form is glycosylated and this is required for efficient secretion of the protein from infected cells. In terms of processing, polyubiquitinated; ubiquitination is probably mediated by host TRIM23 and is prerequisite for NS5-STAT2 interaction. NS5 is not ISGylated or sumoylated. Post-translationally, acetylated by host KAT5. Acetylation modulates NS3 RNA-binding and unwinding activities and plays an important positive role for viral replication. Phosphorylated on serines residues. This phosphorylation may trigger NS5 nuclear localization.

The protein localises to the virion. The protein resides in the host nucleus. Its subcellular location is the host cytoplasm. It is found in the host perinuclear region. It localises to the secreted. The protein localises to the virion membrane. The protein resides in the host endoplasmic reticulum membrane. The catalysed reaction is Selective hydrolysis of -Xaa-Xaa-|-Yaa- bonds in which each of the Xaa can be either Arg or Lys and Yaa can be either Ser or Ala.. The enzyme catalyses RNA(n) + a ribonucleoside 5'-triphosphate = RNA(n+1) + diphosphate. It catalyses the reaction a ribonucleoside 5'-triphosphate + H2O = a ribonucleoside 5'-diphosphate + phosphate + H(+). It carries out the reaction ATP + H2O = ADP + phosphate + H(+). The catalysed reaction is a 5'-end (5'-triphosphoguanosine)-ribonucleoside in mRNA + S-adenosyl-L-methionine = a 5'-end (N(7)-methyl 5'-triphosphoguanosine)-ribonucleoside in mRNA + S-adenosyl-L-homocysteine. The enzyme catalyses a 5'-end (N(7)-methyl 5'-triphosphoguanosine)-ribonucleoside in mRNA + S-adenosyl-L-methionine = a 5'-end (N(7)-methyl 5'-triphosphoguanosine)-(2'-O-methyl-ribonucleoside) in mRNA + S-adenosyl-L-homocysteine + H(+). Functionally, plays a role in virus budding by binding to the cell membrane and gathering the viral RNA into a nucleocapsid that forms the core of a mature virus particle. During virus entry, may induce genome penetration into the host cytoplasm after hemifusion induced by the surface proteins. Can migrate to the cell nucleus where it modulates host functions. Its function is as follows. Inhibits RNA silencing by interfering with host Dicer. Prevents premature fusion activity of envelope proteins in trans-Golgi by binding to envelope protein E at pH6.0. After virion release in extracellular space, gets dissociated from E dimers. In terms of biological role, acts as a chaperone for envelope protein E during intracellular virion assembly by masking and inactivating envelope protein E fusion peptide. prM is the only viral peptide matured by host furin in the trans-Golgi network probably to avoid catastrophic activation of the viral fusion activity in acidic Golgi compartment prior to virion release. prM-E cleavage is inefficient, and many virions are only partially matured. These uncleaved prM would play a role in immune evasion. Functionally, may play a role in virus budding. Exerts cytotoxic effects by activating a mitochondrial apoptotic pathway through M ectodomain. May display a viroporin activity. Its function is as follows. Binds to host cell surface receptor and mediates fusion between viral and cellular membranes. Envelope protein is synthesized in the endoplasmic reticulum in the form of heterodimer with protein prM. They play a role in virion budding in the ER, and the newly formed immature particle is covered with 60 spikes composed of heterodimer between precursor prM and envelope protein E. The virion is transported to the Golgi apparatus where the low pH causes dissociation of PrM-E heterodimers and formation of E homodimers. prM-E cleavage is inefficient, and many virions are only partially matured. These uncleaved prM would play a role in immune evasion. Involved in immune evasion, pathogenesis and viral replication. Once cleaved off the polyprotein, is targeted to three destinations: the viral replication cycle, the plasma membrane and the extracellular compartment. Essential for viral replication. Required for formation of the replication complex and recruitment of other non-structural proteins to the ER-derived membrane structures. Excreted as a hexameric lipoparticle that plays a role against host immune response. Antagonizing the complement function. Binds to the host macrophages and dendritic cells. Inhibits signal transduction originating from Toll-like receptor 3 (TLR3). In terms of biological role, component of the viral RNA replication complex that functions in virion assembly and antagonizes the host immune response. Functionally, required cofactor for the serine protease function of NS3. May have membrane-destabilizing activity and form viroporins. Its function is as follows. Displays three enzymatic activities: serine protease, NTPase and RNA helicase. NS3 serine protease, in association with NS2B, performs its autocleavage and cleaves the polyprotein at dibasic sites in the cytoplasm: C-prM, NS2A-NS2B, NS2B-NS3, NS3-NS4A, NS4A-2K and NS4B-NS5. NS3 RNA helicase binds RNA and unwinds dsRNA in the 3' to 5' direction. Also plays a role in virus assembly. Regulates the ATPase activity of the NS3 helicase activity. NS4A allows NS3 helicase to conserve energy during unwinding. In terms of biological role, functions as a signal peptide for NS4B and is required for the interferon antagonism activity of the latter. Functionally, induces the formation of ER-derived membrane vesicles where the viral replication takes place. Inhibits interferon (IFN)-induced host STAT1 phosphorylation and nuclear translocation, thereby preventing the establishment of cellular antiviral state by blocking the IFN-alpha/beta pathway. Its function is as follows. Replicates the viral (+) and (-) RNA genome, and performs the capping of genomes in the cytoplasm. NS5 methylates viral RNA cap at guanine N-7 and ribose 2'-O positions. Besides its role in RNA genome replication, also prevents the establishment of cellular antiviral state by blocking the interferon-alpha/beta (IFN-alpha/beta) signaling pathway. IFN-I induces binding of NS5 to host IFN-activated transcription factor STAT2, preventing its transcriptional activity. Host TRIM23 is the E3 ligase that interacts with and polyubiquitinates NS5 to promote its binding to STAT2 and trigger IFN-I signaling inhibition. The chain is Genome polyprotein from Yellow fever virus (isolate Ethiopia/Couma/1961) (YFV).